The following is a 195-amino-acid chain: U8 snoRNA-decapping enzyme (195 aa).

Residues 18 to 168 (GWRHACHAML…LENTFIGNAR (151 aa)) enclose the Nudix hydrolase domain. Substrate is bound by residues His24, Arg50, and Phe57. Residues Gly59, Glu76, Glu80, and His99 each coordinate Mn(2+). The Nudix box signature appears at 61–82 (FVDLRDGSLEDGLNRELGEELG). Asn166 and Gln170 together coordinate substrate. Glu173 lines the Mn(2+) pocket.

It belongs to the Nudix hydrolase family. NUDT16 subfamily. Homodimer. Mg(2+) is required as a cofactor. The cofactor is Mn(2+). Requires Co(2+) as cofactor.

The protein resides in the nucleus. Its subcellular location is the nucleolus. It localises to the nucleoplasm. The protein localises to the cytoplasm. The enzyme catalyses a 5'-end (N(7)-methyl 5'-triphosphoguanosine)-ribonucleoside in mRNA + H2O = N(7)-methyl-GDP + a 5'-end phospho-ribonucleoside in mRNA + 2 H(+). It catalyses the reaction IDP + H2O = IMP + phosphate + H(+). It carries out the reaction dIDP + H2O = dIMP + phosphate + H(+). The catalysed reaction is a 5'-end NAD(+)-phospho-ribonucleoside in mRNA + H2O = a 5'-end phospho-ribonucleoside in mRNA + NAD(+) + H(+). The enzyme catalyses a 5'-end FAD-phospho-ribonucleoside in mRNA + H2O = a 5'-end phospho-adenosine-phospho-ribonucleoside in mRNA + FMN + 2 H(+). It catalyses the reaction a 5'-end CoA-ribonucleoside in mRNA + H2O = a 5'-end phospho-adenosine-phospho-ribonucleoside in mRNA + (R)-4'-phosphopantetheine + 2 H(+). In terms of biological role, RNA-binding and decapping enzyme that catalyzes the cleavage of the cap structure of snoRNAs and mRNAs in a metal-dependent manner. Part of the U8 snoRNP complex that is required for the accumulation of mature 5.8S and 28S rRNA. Has diphosphatase activity and removes m7G and/or m227G caps from U8 snoRNA and leaves a 5'monophosphate on the RNA. Also catalyzes the cleavage of the cap structure on mRNAs. Does not hydrolyze cap analog structures like 7-methylguanosine nucleoside triphosphate (m7GpppG). Also hydrolysis m7G- and m227G U3-capped RNAs but with less efficiencies. Has broad substrate specificity with manganese or cobalt as cofactor and can act on various RNA species. Binds to the U8 snoRNA; metal is not required for RNA-binding. May play a role in the regulation of snoRNAs and mRNAs degradation. Also acts as a phosphatase; hydrolyzes the non-canonical purine nucleotides inosine diphosphate (IDP) and deoxyinosine diphosphate (dITP) as well as guanosine diphosphate (GDP), deoxyguanosine diphosphate (dGDP), xanthine diphosphate (XDP), inosine triphosphate (ITP) and deoxyinosine triphosphate (ITP) to their respective monophosphate derivatives and does not distinguish between the deoxy- and ribose forms. The order of activity with different substrates is IDP &gt; dIDP &gt;&gt; GDP = dGDP &gt; XDP = ITP = dITP. Binds strongly to GTP, ITP and XTP. Participates in the hydrolysis of dIDP/IDP and probably excludes non-canonical purines from RNA and DNA precursor pools, thus preventing their incorporation into RNA and DNA and avoiding chromosomal lesions. Exhibits decapping activity towards NAD-capped RNAs and FAD-capped RNAs. Exhibits decapping activity towards dpCoA-capped RNAs in vitro. In Ovis aries (Sheep), this protein is U8 snoRNA-decapping enzyme (NUDT16).